Consider the following 2055-residue polypeptide: Dedicator of cytokinesis protein 9 (2055 aa).

Residues Ser-178 and Ser-181 each carry the phosphoserine modification. The PH domain occupies 185-292; it reads GITKHGWLYK…WVTVLNKILQ (108 aa). The disordered stretch occupies residues 301–326; the sequence is EKRNGDPHEDDEQSKLEGSGSGLDSY. Phosphoserine occurs at positions 444 and 453. The region spanning 649–827 is the C2 DOCK-type domain; that stretch reads SNHLYVYPKY…PLLKISTHLV (179 aa). A phosphoserine mark is found at Ser-936 and Ser-1244. Thr-1250 is subject to Phosphothreonine. Residues 1253–1291 are disordered; sequence INSVRNADSRGSLISTDSGNSLPDRNPEKSNSLDKQQQS. A phosphoserine mark is found at Ser-1264, Ser-1270, and Ser-1273. Positions 1264-1276 are enriched in polar residues; sequence SLISTDSGNSLPD. Residues 1614–2055 form the DOCKER domain; the sequence is KSYASTPELR…LSDIMREQMG (442 aa). The interaction with CDC42 stretch occupies residues 1679–2055; sequence DEEASMMEDV…LSDIMREQMG (377 aa).

This sequence belongs to the DOCK family. Homodimer. Interacts preferentially with nucleotide-depleted CDC42. As to expression, expressed in lung. Also detected in Peyers patches, thymus, brain and lymph nodes. Expressed in Purkinje cells.

It localises to the endomembrane system. In terms of biological role, guanine nucleotide-exchange factor (GEF) that activates CDC42 by exchanging bound GDP for free GTP. Overexpression induces filopodia formation. The polypeptide is Dedicator of cytokinesis protein 9 (Mus musculus (Mouse)).